We begin with the raw amino-acid sequence, 300 residues long: Tyrosine recombinase XerC (300 aa).

A Core-binding (CB) domain is found at 2–88; the sequence is TQEGQLEKRF…SLRSFYTFLL (87 aa). The region spanning 109-294 is the Tyr recombinase domain; sequence RLPKFFYSEE…TKEHLKSTYM (186 aa). Active-site residues include R150, K174, H246, R249, and H272. Y281 (O-(3'-phospho-DNA)-tyrosine intermediate) is an active-site residue.

The protein belongs to the 'phage' integrase family. XerC subfamily. In terms of assembly, forms a cyclic heterotetrameric complex composed of two molecules of XerC and two molecules of XerD.

It localises to the cytoplasm. In terms of biological role, site-specific tyrosine recombinase, which acts by catalyzing the cutting and rejoining of the recombining DNA molecules. The XerC-XerD complex is essential to convert dimers of the bacterial chromosome into monomers to permit their segregation at cell division. It also contributes to the segregational stability of plasmids. The protein is Tyrosine recombinase XerC of Listeria innocua serovar 6a (strain ATCC BAA-680 / CLIP 11262).